The sequence spans 394 residues: Elongation factor Tu (394 aa).

A tr-type G domain is found at 10 to 204; it reads KPHVNVGTIG…HLDSYIPEPE (195 aa). A G1 region spans residues 19 to 26; it reads GHVDHGKT. GTP is bound at residue 19–26; that stretch reads GHVDHGKT. Thr-26 lines the Mg(2+) pocket. The segment at 60–64 is G2; it reads GITIN. The G3 stretch occupies residues 81–84; that stretch reads DCPG. Residues 81–85 and 136–139 each bind GTP; these read DCPGH and NKCD. Residues 136–139 are G4; that stretch reads NKCD. The segment at 174–176 is G5; sequence SAL.

It belongs to the TRAFAC class translation factor GTPase superfamily. Classic translation factor GTPase family. EF-Tu/EF-1A subfamily. Monomer.

The protein localises to the cytoplasm. The catalysed reaction is GTP + H2O = GDP + phosphate + H(+). Its function is as follows. GTP hydrolase that promotes the GTP-dependent binding of aminoacyl-tRNA to the A-site of ribosomes during protein biosynthesis. The protein is Elongation factor Tu of Haemophilus ducreyi (strain 35000HP / ATCC 700724).